Consider the following 903-residue polypeptide: HTH-type transcriptional regulator MalT (903 aa).

Residue 39-46 (CPAGYGKT) coordinates ATP. In terms of domain architecture, HTH luxR-type spans 832-897 (ELIRTSPLTQ…EAVQQAQRLL (66 aa)). The H-T-H motif DNA-binding region spans 856 to 875 (NDQIANELDVAATTIKTHIR).

The protein belongs to the MalT family. As to quaternary structure, monomer in solution. Oligomerizes to an active state in the presence of the positive effectors ATP and maltotriose.

With respect to regulation, activated by ATP and maltotriose, which are both required for DNA binding. In terms of biological role, positively regulates the transcription of the maltose regulon whose gene products are responsible for uptake and catabolism of malto-oligosaccharides. Specifically binds to the promoter region of its target genes, recognizing a short DNA motif called the MalT box. In Yersinia pseudotuberculosis serotype O:1b (strain IP 31758), this protein is HTH-type transcriptional regulator MalT.